The sequence spans 655 residues: Polycyclic ketone monooxygenase (655 aa).

The FAD site is built by glycine 89, aspartate 113, alanine 114, threonine 121, tryptophan 124, cysteine 132, aspartate 133, tyrosine 139, and valine 183. Residues threonine 277, threonine 280, threonine 301, lysine 425, and valine 452 each contribute to the NADPH site. A disulfide bond links cysteine 424 and cysteine 596. 2 residues coordinate FAD: threonine 492 and asparagine 541. Tyrosine 600 is a binding site for NADPH.

The protein belongs to the FAD-binding monooxygenase family. The cofactor is FAD.

Polycyclic ketone monooxygenase (PockeMO) that displays excellent enantioselectivity, acts on various ketones, and is particularly active on polycyclic molecules. Breaks C-C bonds through the insertion of a single oxygen atom adjacent to a carbonyl moiety, yielding esters or lactones from ketones. PockeMO is able to convert linear ketones (including cyclohexane and to a lesser extend 4-octanone), cyclic ketones (including cyclohexanone and cyclooctanone), bicyclic ketones and polycyclic ketones (steroids). Performs oxidation of the keto functionalities at both the A and D rings of steroids. Particularly, oxidizes the A ring of stanolone or pregnenolone. Selectively oxidizes the D ring of androstenedione or androstadienedione, steroids with keto groups in both the A and D rings, to yield the pharmaceutically relevant testo(lo)lactone. The chain is Polycyclic ketone monooxygenase from Thermothelomyces thermophilus (strain ATCC 42464 / BCRC 31852 / DSM 1799) (Sporotrichum thermophile).